Here is a 98-residue protein sequence, read N- to C-terminus: MTLIHMNILMAFSMSLVGLLMYRSHLMSALLCLEGMMLSLFILAALTILNSHFTLANMMPIILLVFAACEAAIGLALLVMVSNTYGTDYVQSLNLLQC.

A run of 3 helical transmembrane segments spans residues 1-21, 29-49, and 61-81; these read MTLIHMNILMAFSMSLVGLLM, ALLCLEGMMLSLFILAALTIL, and IILLVFAACEAAIGLALLVMV.

The protein belongs to the complex I subunit 4L family. In terms of assembly, core subunit of respiratory chain NADH dehydrogenase (Complex I) which is composed of 45 different subunits.

It localises to the mitochondrion inner membrane. It catalyses the reaction a ubiquinone + NADH + 5 H(+)(in) = a ubiquinol + NAD(+) + 4 H(+)(out). In terms of biological role, core subunit of the mitochondrial membrane respiratory chain NADH dehydrogenase (Complex I) which catalyzes electron transfer from NADH through the respiratory chain, using ubiquinone as an electron acceptor. Part of the enzyme membrane arm which is embedded in the lipid bilayer and involved in proton translocation. In Balaenoptera omurai (Omura's baleen whale), this protein is NADH-ubiquinone oxidoreductase chain 4L (MT-ND4L).